Consider the following 1394-residue polypeptide: ABC transporter patM (1394 aa).

The segment at 1-41 is disordered; the sequence is MVDNYHSSLDVAKTPIQSDADAQKSEAETEGPSSKSSQIAA. Residues 98–341 enclose the ABC transporter 1 domain; sequence SPLQNRQRKQ…FEDLGFECLS (244 aa). 6 consecutive transmembrane segments (helical) span residues 437–457, 467–487, 511–531, 546–566, 579–599, and 688–708; these read SLWA…GTLF, LFIF…QSMA, IAYA…AICY, GNFF…SMFF, AVLP…LYVP, and VGIN…GMEM. Residues 727-755 are disordered; it reads VTHRRDKIDSETGQDQGNESSEMSAGQSN. Over residues 737 to 755 the composition is skewed to polar residues; the sequence is ETGQDQGNESSEMSAGQSN. Positions 767-1013 constitute an ABC transporter 2 domain; that stretch reads DKSHNLAWTN…EAIQYFQPRS (247 aa). 808–815 lines the ATP pocket; that stretch reads GVSGAGKT. 6 helical membrane passes run 1131–1151, 1177–1197, 1219–1239, 1245–1265, 1280–1300, and 1368–1388; these read GAYN…PLGL, LAFV…SSLV, FLMY…CASL, AAFA…GTLS, ISPL…DLPI, and IGVF…MTYL.

It belongs to the ABC transporter superfamily. ABCG family. PDR (TC 3.A.1.205) subfamily.

It localises to the vacuole membrane. It is found in the cell membrane. It functions in the pathway mycotoxin biosynthesis; patulin biosynthesis. In terms of biological role, ABC transporter; part of the gene cluster that mediates the biosynthesis of patulin, an acetate-derived tetraketide mycotoxin produced by several fungal species that shows antimicrobial properties against several bacteria. May be involved in the secretion of E-ascladiol to be converted to patulin by the secreted patulin synthase patE. In Penicillium expansum (Blue mold rot fungus), this protein is ABC transporter patM.